A 431-amino-acid polypeptide reads, in one-letter code: 5-methylthioadenosine/S-adenosylhomocysteine deaminase (431 aa).

Zn(2+) contacts are provided by His66 and His68. 3 residues coordinate substrate: Glu95, Arg147, and His185. Zn(2+) is bound at residue His212. Residues Glu215 and Asp300 each contribute to the substrate site. Residue Asp300 coordinates Zn(2+).

It belongs to the metallo-dependent hydrolases superfamily. MTA/SAH deaminase family. Requires Zn(2+) as cofactor.

It catalyses the reaction S-adenosyl-L-homocysteine + H2O + H(+) = S-inosyl-L-homocysteine + NH4(+). The catalysed reaction is S-methyl-5'-thioadenosine + H2O + H(+) = S-methyl-5'-thioinosine + NH4(+). Its function is as follows. Catalyzes the deamination of 5-methylthioadenosine and S-adenosyl-L-homocysteine into 5-methylthioinosine and S-inosyl-L-homocysteine, respectively. Is also able to deaminate adenosine. In Desulfitobacterium hafniense (strain Y51), this protein is 5-methylthioadenosine/S-adenosylhomocysteine deaminase.